The chain runs to 237 residues: Ly6/PLAUR domain-containing protein 8 (237 aa).

The signal sequence occupies residues 1–19; the sequence is MKGILVAGITAVLVAAVES. N45, N73, N107, N118, N132, N172, N175, and N185 each carry an N-linked (GlcNAc...) asparagine glycan. One can recognise a UPAR/Ly6 domain in the interval 125 to 176; the sequence is CPACYESNGTSCHGKPWKCYEEEQCVFLVAELKNDIESKSLVLKGCSNVSNA. The GPI-anchor amidated asparagine moiety is linked to residue N215. A propeptide spans 216-237 (removed in mature form); that stretch reads VGSKASLYLLALASLLLRGLLP.

The protein belongs to the CNF-like-inhibitor family. In terms of processing, highly N-glycosylated. Not O-glycosylated. Post-translationally, GPI-anchored. The GPI-anchor is cleaved, leading to secretion into the colonic lumen. In terms of tissue distribution, expressed in the large intestine. Preferentially expressed on the epithelial layer exposed to the lumen (at protein level).

The protein resides in the cell membrane. It is found in the secreted. In terms of biological role, secreted protein specifically required to prevent invasion of Gram-negative bacteria in the inner mucus layer of the colon epithelium, a portion of the large intestine which is free of commensal microbiota. Prevents invasion of flagellated microbiota by binding to the flagellum of bacteria, such as P.mirabilis, thereby inhibiting bacterial motility in the intestinal lumen. Segregation of intestinal bacteria and epithelial cells in the colon is required to preserve intestinal homeostasis. The sequence is that of Ly6/PLAUR domain-containing protein 8 from Homo sapiens (Human).